Here is a 60-residue protein sequence, read N- to C-terminus: DNA-binding protein 7c (60 aa).

The disordered stretch occupies residues 37-60 (DNGKTGRGAVSEKDAPKELLEKLK). The span at 46–60 (VSEKDAPKELLEKLK) shows a compositional bias: basic and acidic residues.

This sequence belongs to the 7 kDa DNA-binding/endoribonuclease P2 family. Monomer.

It localises to the cytoplasm. Functionally, can constrain negative DNA supercoils. May be involved in maintaining the integrity of the genome at high temperature. This is DNA-binding protein 7c from Acidianus hospitalis (strain W1).